A 297-amino-acid chain; its full sequence is N-acetylneuraminate lyase (297 aa).

Aceneuramate is bound by residues Ser-47 and Thr-48. Tyr-137 acts as the Proton donor in catalysis. Lys-165 acts as the Schiff-base intermediate with substrate in catalysis. Residues Thr-167, Gly-189, Asp-191, Glu-192, and Ser-208 each contribute to the aceneuramate site.

This sequence belongs to the DapA family. NanA subfamily. Homotetramer.

The protein localises to the cytoplasm. It catalyses the reaction aceneuramate = aldehydo-N-acetyl-D-mannosamine + pyruvate. Its pathway is amino-sugar metabolism; N-acetylneuraminate degradation; D-fructose 6-phosphate from N-acetylneuraminate: step 1/5. Its function is as follows. Catalyzes the reversible aldol cleavage of N-acetylneuraminic acid (sialic acid; Neu5Ac) to form pyruvate and N-acetylmannosamine (ManNAc) via a Schiff base intermediate. This Shigella boydii serotype 4 (strain Sb227) protein is N-acetylneuraminate lyase.